The following is a 61-amino-acid chain: MARKGLVERWKKPKKFKTREYTRCKICGRTHSVYREFGVCRVCFRKMANEGKLPGVRKATW.

The Zn(2+) site is built by cysteine 24, cysteine 27, cysteine 40, and cysteine 43.

It belongs to the universal ribosomal protein uS14 family. Zinc-binding uS14 subfamily. As to quaternary structure, part of the 30S ribosomal subunit. Contacts proteins S3 and S10. Requires Zn(2+) as cofactor.

Functionally, binds 16S rRNA, required for the assembly of 30S particles and may also be responsible for determining the conformation of the 16S rRNA at the A site. This is Small ribosomal subunit protein uS14 from Thermosipho melanesiensis (strain DSM 12029 / CIP 104789 / BI429).